The sequence spans 147 residues: Methylglyoxal synthase (147 aa).

One can recognise an MGS-like domain in the interval 1–147 (MKGQRNIGMV…TPYVKRLGAK (147 aa)). Substrate-binding positions include His12, Lys16, 38-41 (TGTT), and 59-60 (SG). Asp65 serves as the catalytic Proton donor/acceptor. His92 is a binding site for substrate.

The protein belongs to the methylglyoxal synthase family.

The catalysed reaction is dihydroxyacetone phosphate = methylglyoxal + phosphate. Functionally, catalyzes the formation of methylglyoxal from dihydroxyacetone phosphate. This chain is Methylglyoxal synthase, found in Oleidesulfovibrio alaskensis (strain ATCC BAA-1058 / DSM 17464 / G20) (Desulfovibrio alaskensis).